A 1071-amino-acid polypeptide reads, in one-letter code: DNA-directed RNA polymerase subunit beta (1071 aa).

This sequence belongs to the RNA polymerase beta chain family. As to quaternary structure, in plastids the minimal PEP RNA polymerase catalytic core is composed of four subunits: alpha, beta, beta', and beta''. When a (nuclear-encoded) sigma factor is associated with the core the holoenzyme is formed, which can initiate transcription.

The protein resides in the plastid. The protein localises to the chloroplast. The enzyme catalyses RNA(n) + a ribonucleoside 5'-triphosphate = RNA(n+1) + diphosphate. Functionally, DNA-dependent RNA polymerase catalyzes the transcription of DNA into RNA using the four ribonucleoside triphosphates as substrates. The protein is DNA-directed RNA polymerase subunit beta of Adiantum capillus-veneris (Maidenhair fern).